Here is a 348-residue protein sequence, read N- to C-terminus: Phospho-2-dehydro-3-deoxyheptonate aldolase, Trp-sensitive (348 aa).

The protein belongs to the class-I DAHP synthase family.

It carries out the reaction D-erythrose 4-phosphate + phosphoenolpyruvate + H2O = 7-phospho-2-dehydro-3-deoxy-D-arabino-heptonate + phosphate. It functions in the pathway metabolic intermediate biosynthesis; chorismate biosynthesis; chorismate from D-erythrose 4-phosphate and phosphoenolpyruvate: step 1/7. In terms of biological role, stereospecific condensation of phosphoenolpyruvate (PEP) and D-erythrose-4-phosphate (E4P) giving rise to 3-deoxy-D-arabino-heptulosonate-7-phosphate (DAHP). This Salmonella typhi protein is Phospho-2-dehydro-3-deoxyheptonate aldolase, Trp-sensitive (aroH).